Reading from the N-terminus, the 572-residue chain is AAA ATPase forming ring-shaped complexes (572 aa).

The span at 1 to 18 (MTTASQQTSSHSTASSTS) shows a compositional bias: low complexity. The interval 1-30 (MTTASQQTSSHSTASSTSRKGNNNDATPSL) is disordered. Residues 42-70 (TRNAKLVEMLKASRDKLDALNEQIRALSD) are a coiled coil. 258–263 (GCGKTL) serves as a coordination point for ATP. Positions 543–572 (VAHHNRKTTTETEATEPEGTDSGKGHTDAS) are disordered. A compositionally biased stretch (basic and acidic residues) spans 563–572 (DSGKGHTDAS).

Belongs to the AAA ATPase family. Homohexamer. Assembles into a hexameric ring structure.

This is AAA ATPase forming ring-shaped complexes from Corynebacterium kroppenstedtii (strain DSM 44385 / JCM 11950 / CIP 105744 / CCUG 35717).